The chain runs to 659 residues: Threonine--tRNA ligase (659 aa).

The region spanning 1 to 60 (MTVYLPDGKPLELPEGATAKDVARALGEGWERRAVGAIVDGELYDLLKPLPQGAKVRLLT) is the TGS domain. Catalytic stretches follow at residues 234–548 (TAEE…EHFA) and 252–552 (DHRR…GDFP). Residues Cys-349, His-400, and His-529 each coordinate Zn(2+).

Belongs to the class-II aminoacyl-tRNA synthetase family. As to quaternary structure, homodimer. It depends on Zn(2+) as a cofactor.

The protein resides in the cytoplasm. The enzyme catalyses tRNA(Thr) + L-threonine + ATP = L-threonyl-tRNA(Thr) + AMP + diphosphate + H(+). Its function is as follows. Catalyzes the attachment of threonine to tRNA(Thr) in a two-step reaction: L-threonine is first activated by ATP to form Thr-AMP and then transferred to the acceptor end of tRNA(Thr). Also edits incorrectly charged L-seryl-tRNA(Thr). In Thermus thermophilus (strain ATCC 27634 / DSM 579 / HB8), this protein is Threonine--tRNA ligase.